We begin with the raw amino-acid sequence, 172 residues long: Ribosome maturation factor RimM (172 aa).

Residues 96 to 168 (EGEFYYHQII…RVDVELMEGL (73 aa)) form the PRC barrel domain.

This sequence belongs to the RimM family. Binds ribosomal protein uS19.

The protein resides in the cytoplasm. An accessory protein needed during the final step in the assembly of 30S ribosomal subunit, possibly for assembly of the head region. Essential for efficient processing of 16S rRNA. May be needed both before and after RbfA during the maturation of 16S rRNA. It has affinity for free ribosomal 30S subunits but not for 70S ribosomes. The sequence is that of Ribosome maturation factor RimM from Streptococcus pyogenes serotype M28 (strain MGAS6180).